The primary structure comprises 315 residues: Rhomboid-related protein 4 (315 aa).

The Cytoplasmic segment spans residues 1-21 (MQRRSRGINTGLILLLSQIFH). A helical transmembrane segment spans residues 22 to 42 (VGINNIPPVTLATLALNIWFF). Topologically, residues 43–106 (LNPQKPLYSS…RRLGSRWFAY (64 aa)) are extracellular. Residues 107–127 (VITAFSVLTGVVYLLLQFAVA) traverse the membrane as a helical segment. Residues 128-138 (EFMDEPDFKRS) are Cytoplasmic-facing. The chain crosses the membrane as a helical span at residues 139–157 (CAVGFSGVLFALKVLNNHY). Ser-144 functions as the Nucleophile in the catalytic mechanism. The Extracellular portion of the chain corresponds to 158–180 (CPGGFVNILGFPVPNRFACWVEL). A helical membrane pass occupies residues 181-201 (VAIHLFSPGTSFAGHLAGILV). His-195 is a catalytic residue. Residues 202 to 315 (GLMYTQGPLK…RQRLHRFDSQ (114 aa)) lie on the Cytoplasmic side of the membrane. The interval 269 to 284 (SEEEQLERALQASLWD) is ubiquitin-binding domain (UBD). Residues 283–315 (WDRGNTRNSPPPYGFHLSPEEMRRQRLHRFDSQ) are disordered. Over residues 300-315 (SPEEMRRQRLHRFDSQ) the composition is skewed to basic and acidic residues. The tract at residues 301–315 (PEEMRRQRLHRFDSQ) is VCP/p97-interacting motif (VIM).

The protein belongs to the peptidase S54 family. As to quaternary structure, interacts (via C-terminal domain) with VCP. Interacts with ubiquitin and ubiquitinated proteins. Interacts with BIK and STEAP3. As to expression, expressed strongly in testis.

The protein localises to the endoplasmic reticulum membrane. It localises to the mitochondrion membrane. The enzyme catalyses Cleaves type-1 transmembrane domains using a catalytic dyad composed of serine and histidine that are contributed by different transmembrane domains.. Its activity is regulated as follows. Inhibited by aprotinin. Intramembrane-cleaving serine protease that cleaves single transmembrane or multi-pass membrane proteins in the hydrophobic plane of the membrane, luminal loops and juxtamembrane regions. Involved in regulated intramembrane proteolysis and the subsequent release of functional polypeptides from their membrane anchors. Functional component of endoplasmic reticulum-associated degradation (ERAD) for misfolded membrane proteins. Required for the degradation process of some specific misfolded endoplasmic reticulum (ER) luminal proteins. Participates in the transfer of misfolded proteins from the ER to the cytosol, where they are destroyed by the proteasome in a ubiquitin-dependent manner. Functions in BIK, MPZ, PKD1, PTCRA, RHO, STEAP3 and TRAC processing. Involved in the regulation of exosomal secretion; inhibits the TSAP6-mediated secretion pathway. Involved in the regulation of apoptosis; modulates BIK-mediated apoptotic activity. Also plays a role in the regulation of spermatogenesis; inhibits apoptotic activity in spermatogonia. This is Rhomboid-related protein 4 (RHBDD1) from Homo sapiens (Human).